Consider the following 179-residue polypeptide: MLKVEERYTNAVPELQKAFKYENIMQVPKLVKVVINTGVGEAVSNSKALETAEADIVAIAGQHPVITRAKRSVANFKLRAGMPIGLKVTLRGQRMYDFLNKLFFITLPRVRDFQGVSNTAFDEHGNYTLGFKDHSVFPEIDFNKIEKPRGLEVCIVTTANTPEEGKKLLELLGMPFSKD.

This sequence belongs to the universal ribosomal protein uL5 family. As to quaternary structure, part of the 50S ribosomal subunit; part of the 5S rRNA/L5/L18/L25 subcomplex. Contacts the 5S rRNA and the P site tRNA. Forms a bridge to the 30S subunit in the 70S ribosome.

This is one of the proteins that bind and probably mediate the attachment of the 5S RNA into the large ribosomal subunit, where it forms part of the central protuberance. In the 70S ribosome it contacts protein S13 of the 30S subunit (bridge B1b), connecting the 2 subunits; this bridge is implicated in subunit movement. Contacts the P site tRNA; the 5S rRNA and some of its associated proteins might help stabilize positioning of ribosome-bound tRNAs. In Dehalococcoides mccartyi (strain ATCC BAA-2266 / KCTC 15142 / 195) (Dehalococcoides ethenogenes (strain 195)), this protein is Large ribosomal subunit protein uL5.